The primary structure comprises 470 residues: Putative dipeptidase TSTA_079200 (470 aa).

The helical transmembrane segment at 40-60 (AWLFGLGTLGIILASVLLNPF) threads the bilayer. Residues H92 and D94 each coordinate Zn(2+). Residues C143 and C237 are joined by a disulfide bond. N188 carries N-linked (GlcNAc...) asparagine glycosylation. E208 lines the Zn(2+) pocket. Position 235 (H235) interacts with substrate. Zn(2+) contacts are provided by H279 and H300. R311 and D371 together coordinate substrate.

This sequence belongs to the metallo-dependent hydrolases superfamily. Peptidase M19 family. Zn(2+) is required as a cofactor.

It is found in the membrane. It catalyses the reaction an L-aminoacyl-L-amino acid + H2O = 2 an L-alpha-amino acid. Its function is as follows. Hydrolyzes a wide range of dipeptides. This chain is Putative dipeptidase TSTA_079200, found in Talaromyces stipitatus (strain ATCC 10500 / CBS 375.48 / QM 6759 / NRRL 1006) (Penicillium stipitatum).